The primary structure comprises 178 residues: MAEPITLARPYAKAAFEAARDASALQSWSDALVEAAAITRDSKVKALLSSPSLTAVQKAAAFIDLCGDTLNEAQKNFIRVLADNNRLPLFPQVSQLFELYKANQEKAVDVELQTAYDIDDAVLAKLATSLTEKLDRKVSLQTAIDPSLLGGAIIRAGDTVIDGSVRGRLAKLAETMSH.

Belongs to the ATPase delta chain family. As to quaternary structure, F-type ATPases have 2 components, F(1) - the catalytic core - and F(0) - the membrane proton channel. F(1) has five subunits: alpha(3), beta(3), gamma(1), delta(1), epsilon(1). F(0) has three main subunits: a(1), b(2) and c(10-14). The alpha and beta chains form an alternating ring which encloses part of the gamma chain. F(1) is attached to F(0) by a central stalk formed by the gamma and epsilon chains, while a peripheral stalk is formed by the delta and b chains.

The protein localises to the cell inner membrane. In terms of biological role, f(1)F(0) ATP synthase produces ATP from ADP in the presence of a proton or sodium gradient. F-type ATPases consist of two structural domains, F(1) containing the extramembraneous catalytic core and F(0) containing the membrane proton channel, linked together by a central stalk and a peripheral stalk. During catalysis, ATP synthesis in the catalytic domain of F(1) is coupled via a rotary mechanism of the central stalk subunits to proton translocation. Its function is as follows. This protein is part of the stalk that links CF(0) to CF(1). It either transmits conformational changes from CF(0) to CF(1) or is implicated in proton conduction. The protein is ATP synthase subunit delta of Teredinibacter turnerae (strain ATCC 39867 / T7901).